The primary structure comprises 340 residues: DNA-directed RNA polymerase subunit alpha (340 aa).

An alpha N-terminal domain (alpha-NTD) region spans residues 1 to 233 (MIRDEISVST…DLFIPFLRAE (233 aa)). The tract at residues 268–340 (AFKHIFIDQS…DLPKNKFQIH (73 aa)) is alpha C-terminal domain (alpha-CTD).

Belongs to the RNA polymerase alpha chain family. In terms of assembly, in plastids the minimal PEP RNA polymerase catalytic core is composed of four subunits: alpha, beta, beta', and beta''. When a (nuclear-encoded) sigma factor is associated with the core the holoenzyme is formed, which can initiate transcription.

The protein resides in the plastid. It is found in the chloroplast. The catalysed reaction is RNA(n) + a ribonucleoside 5'-triphosphate = RNA(n+1) + diphosphate. In terms of biological role, DNA-dependent RNA polymerase catalyzes the transcription of DNA into RNA using the four ribonucleoside triphosphates as substrates. The sequence is that of DNA-directed RNA polymerase subunit alpha from Cycas taitungensis (Prince sago).